The sequence spans 280 residues: Probable endonuclease 4 (280 aa).

The Zn(2+) site is built by His77, His117, Glu148, Asp180, His183, His215, Asp228, His230, and Glu259.

This sequence belongs to the AP endonuclease 2 family. Zn(2+) serves as cofactor.

The enzyme catalyses Endonucleolytic cleavage to 5'-phosphooligonucleotide end-products.. Endonuclease IV plays a role in DNA repair. It cleaves phosphodiester bonds at apurinic or apyrimidinic (AP) sites, generating a 3'-hydroxyl group and a 5'-terminal sugar phosphate. This chain is Probable endonuclease 4, found in Thermoplasma volcanium (strain ATCC 51530 / DSM 4299 / JCM 9571 / NBRC 15438 / GSS1).